Reading from the N-terminus, the 361-residue chain is NADP-dependent alcohol dehydrogenase 7 (361 aa).

Zn(2+) is bound at residue C46. Residues G47 and H51 each contribute to the NADP(+) site. Zn(2+) contacts are provided by H68, C100, C103, C106, C114, and C164. I189, G191, I192, S211, R212, K216, C251, S253, S256, I276, S300, and I302 together coordinate NADP(+). S316 carries the post-translational modification Phosphoserine. R349 contacts NADP(+).

The protein belongs to the zinc-containing alcohol dehydrogenase family. As to quaternary structure, homodimer. Zn(2+) is required as a cofactor.

It catalyses the reaction a primary alcohol + NADP(+) = an aldehyde + NADPH + H(+). The catalysed reaction is (E)-cinnamyl alcohol + NADP(+) = (E)-cinnamaldehyde + NADPH + H(+). It carries out the reaction 3-methylbutanol + NADP(+) = 3-methylbutanal + NADPH + H(+). NADP-dependent alcohol dehydrogenase with a broad substrate specificity. The oxidative reactions are more than 100 times less efficient than the corresponding reductions, suggesting that the enzyme acts as an aldehyde reductase, rather than as an alcohol dehydrogenase. The chain is NADP-dependent alcohol dehydrogenase 7 (ADH7) from Saccharomyces cerevisiae (strain ATCC 204508 / S288c) (Baker's yeast).